We begin with the raw amino-acid sequence, 53 residues long: ATP synthase protein 8 (53 aa).

The chain crosses the membrane as a helical span at residues 9-29 (WITSMLMFWISVSILFSTLWW).

Belongs to the ATPase protein 8 family. As to quaternary structure, F-type ATPases have 2 components, CF(1) - the catalytic core - and CF(0) - the membrane proton channel.

The protein localises to the mitochondrion membrane. Mitochondrial membrane ATP synthase (F(1)F(0) ATP synthase or Complex V) produces ATP from ADP in the presence of a proton gradient across the membrane which is generated by electron transport complexes of the respiratory chain. F-type ATPases consist of two structural domains, F(1) - containing the extramembraneous catalytic core and F(0) - containing the membrane proton channel, linked together by a central stalk and a peripheral stalk. During catalysis, ATP synthesis in the catalytic domain of F(1) is coupled via a rotary mechanism of the central stalk subunits to proton translocation. Part of the complex F(0) domain. Minor subunit located with subunit a in the membrane. This Lumbricus terrestris (Common earthworm) protein is ATP synthase protein 8 (MT-ATP8).